The sequence spans 188 residues: Mediator of RNA polymerase II transcription subunit 11 (188 aa).

A coiled-coil region spans residues 46-72 (KNKMEDNANNFKKLITQVENELSAQMQ). Positions 116 to 188 (DPTSDEPQTT…MTDDDDDMEQ (73 aa)) are disordered. Residues 123–141 (QTTEEDEEDGSDDLNEDGA) are compositionally biased toward acidic residues. Low complexity predominate over residues 146-155 (SSTVTSSTTD). Over residues 171–180 (SQEESGRQMT) the composition is skewed to basic and acidic residues.

This sequence belongs to the Mediator complex subunit 11 family. As to quaternary structure, component of the Mediator complex.

It is found in the nucleus. In terms of biological role, component of the Mediator complex, a coactivator involved in the regulated transcription of nearly all RNA polymerase II-dependent genes. Mediator functions as a bridge to convey information from gene-specific regulatory proteins to the basal RNA polymerase II transcription machinery. Mediator is recruited to promoters by direct interactions with regulatory proteins and serves as a scaffold for the assembly of a functional pre-initiation complex with RNA polymerase II and the general transcription factors. The protein is Mediator of RNA polymerase II transcription subunit 11 (mdt-11) of Caenorhabditis elegans.